We begin with the raw amino-acid sequence, 100 residues long: MNPRQLEQMARQMQKEMMRIQEELANATVEGTAGSYITVTMNGHREIKSIKIAPEVVDPDDIETLQDLIVAAITDASKKAQELAEQRLGPLAGGMKLPGF.

The protein belongs to the YbaB/EbfC family. In terms of assembly, homodimer.

It localises to the cytoplasm. The protein resides in the nucleoid. Functionally, binds to DNA and alters its conformation. May be involved in regulation of gene expression, nucleoid organization and DNA protection. The polypeptide is Nucleoid-associated protein Rcas_2292 (Roseiflexus castenholzii (strain DSM 13941 / HLO8)).